Reading from the N-terminus, the 177-residue chain is Dual-action ribosomal maturation protein DarP (177 aa).

Positions 1–26 (MKIVGDSEHFKQPYDSDEEYVSKTED) are disordered.

The protein belongs to the DarP family.

The protein localises to the cytoplasm. In terms of biological role, member of a network of 50S ribosomal subunit biogenesis factors which assembles along the 30S-50S interface, preventing incorrect 23S rRNA structures from forming. Promotes peptidyl transferase center (PTC) maturation. This Shewanella sp. (strain ANA-3) protein is Dual-action ribosomal maturation protein DarP.